The chain runs to 390 residues: Chorismate synthase 2 (390 aa).

Positions 39 and 45 each coordinate NADP(+). FMN-binding positions include 132–134 (RSS), 253–254 (NA), G298, 313–317 (KPIPT), and R339.

Belongs to the chorismate synthase family. In terms of assembly, homotetramer. FMNH2 is required as a cofactor.

The enzyme catalyses 5-O-(1-carboxyvinyl)-3-phosphoshikimate = chorismate + phosphate. It functions in the pathway metabolic intermediate biosynthesis; chorismate biosynthesis; chorismate from D-erythrose 4-phosphate and phosphoenolpyruvate: step 7/7. Catalyzes the anti-1,4-elimination of the C-3 phosphate and the C-6 proR hydrogen from 5-enolpyruvylshikimate-3-phosphate (EPSP) to yield chorismate, which is the branch point compound that serves as the starting substrate for the three terminal pathways of aromatic amino acid biosynthesis. This reaction introduces a second double bond into the aromatic ring system. This is Chorismate synthase 2 from Bacillus cereus (strain ATCC 10987 / NRS 248).